The following is a 465-amino-acid chain: Phenylalanine--tRNA ligase alpha subunit (465 aa).

L-phenylalanine is bound by residues T309, 348-350 (QLD), and F388. E390 serves as a coordination point for Mg(2+).

Belongs to the class-II aminoacyl-tRNA synthetase family. Phe-tRNA synthetase alpha subunit type 2 subfamily. As to quaternary structure, tetramer of two alpha and two beta subunits. Requires Mg(2+) as cofactor.

The protein resides in the cytoplasm. It catalyses the reaction tRNA(Phe) + L-phenylalanine + ATP = L-phenylalanyl-tRNA(Phe) + AMP + diphosphate + H(+). The polypeptide is Phenylalanine--tRNA ligase alpha subunit (Sulfolobus acidocaldarius (strain ATCC 33909 / DSM 639 / JCM 8929 / NBRC 15157 / NCIMB 11770)).